The chain runs to 380 residues: Flap endonuclease 1 (380 aa).

The tract at residues 1–105 (MGIKGLAQVL…GELAKRVARH (105 aa)) is N-domain. Mg(2+) is bound at residue D34. 2 residues coordinate DNA: R47 and R71. D87, E159, E161, D180, and D182 together coordinate Mg(2+). The segment at 123-254 (MVDRFAKRTV…ARAVELIRQY (132 aa)) is I-domain. E159 is a DNA binding site. DNA-binding residues include G232 and D234. D234 is a binding site for Mg(2+). Residues 337-345 (PQGRLDSFF) form an interaction with PCNA region. A disordered region spans residues 340–380 (RLDSFFKPVPSSPKKPVDTKSKGSAKRKRDSNKGGESKKKR). Residues 342-353 (DSFFKPVPSSPK) are compositionally biased toward low complexity. S350 and S351 each carry phosphoserine. Residues 370-380 (SNKGGESKKKR) show a composition bias toward basic and acidic residues.

It belongs to the XPG/RAD2 endonuclease family. FEN1 subfamily. In terms of assembly, interacts with PCNA. Three molecules of rad2 bind to one PCNA trimer with each molecule binding to one PCNA monomer. PCNA stimulates the nuclease activity without altering cleavage specificity. It depends on Mg(2+) as a cofactor. In terms of processing, phosphorylated. Phosphorylation upon DNA damage induces relocalization to the nuclear plasma.

The protein localises to the nucleus. It localises to the nucleolus. It is found in the nucleoplasm. The protein resides in the mitochondrion. Its function is as follows. Structure-specific nuclease with 5'-flap endonuclease and 5'-3' exonuclease activities involved in DNA replication and repair. During DNA replication, cleaves the 5'-overhanging flap structure that is generated by displacement synthesis when DNA polymerase encounters the 5'-end of a downstream Okazaki fragment. It enters the flap from the 5'-end and then tracks to cleave the flap base, leaving a nick for ligation. Also involved in the long patch base excision repair (LP-BER) pathway, by cleaving within the apurinic/apyrimidinic (AP) site-terminated flap. Acts as a genome stabilization factor that prevents flaps from equilibrating into structures that lead to duplications and deletions. Also possesses 5'-3' exonuclease activity on nicked or gapped double-stranded DNA, and exhibits RNase H activity. Also involved in replication and repair of rDNA and in repairing mitochondrial DNA. The polypeptide is Flap endonuclease 1 (Schizosaccharomyces pombe (strain 972 / ATCC 24843) (Fission yeast)).